The following is a 901-amino-acid chain: Protein translocase subunit SecA (901 aa).

ATP is bound by residues Gln87, 105–109 (GEGKT), and Asp512. The tract at residues 859-901 (HQDDDSAAAAALAAQTGERKVGRNDPCPCGSGKKYKQCHGRLQ) is disordered. Residues Cys885, Cys887, Cys896, and His897 each coordinate Zn(2+). Positions 891–901 (KKYKQCHGRLQ) are enriched in basic residues.

It belongs to the SecA family. In terms of assembly, monomer and homodimer. Part of the essential Sec protein translocation apparatus which comprises SecA, SecYEG and auxiliary proteins SecDF-YajC and YidC. Zn(2+) serves as cofactor.

The protein localises to the cell inner membrane. It localises to the cytoplasm. It carries out the reaction ATP + H2O + cellular proteinSide 1 = ADP + phosphate + cellular proteinSide 2.. In terms of biological role, part of the Sec protein translocase complex. Interacts with the SecYEG preprotein conducting channel. Has a central role in coupling the hydrolysis of ATP to the transfer of proteins into and across the cell membrane, serving both as a receptor for the preprotein-SecB complex and as an ATP-driven molecular motor driving the stepwise translocation of polypeptide chains across the membrane. This is Protein translocase subunit SecA from Escherichia coli O139:H28 (strain E24377A / ETEC).